Reading from the N-terminus, the 236-residue chain is Eukaryotic translation initiation factor 3 subunit J (236 aa).

The disordered stretch occupies residues 1–84 (MADDWESAAD…RLEEEAEAQR (84 aa)). Residues 28–46 (GEDEDEDIKDSWEDEEEKK) show a composition bias toward acidic residues. 2 stretches are compositionally biased toward basic and acidic residues: residues 47–58 (DEEKPTKTEAPA) and 68–77 (AKLEQQARLE).

It belongs to the eIF-3 subunit J family. In terms of assembly, component of the eukaryotic translation initiation factor 3 (eIF-3) complex. The eIF-3 complex interacts with pix.

Its subcellular location is the cytoplasm. In terms of biological role, component of the eukaryotic translation initiation factor 3 (eIF-3) complex, which is involved in protein synthesis of a specialized repertoire of mRNAs and, together with other initiation factors, stimulates binding of mRNA and methionyl-tRNAi to the 40S ribosome. The eIF-3 complex specifically targets and initiates translation of a subset of mRNAs involved in cell proliferation. This chain is Eukaryotic translation initiation factor 3 subunit J, found in Drosophila yakuba (Fruit fly).